The chain runs to 95 residues: Cell division protein FtsB (95 aa).

Over 1–3 (MRW) the chain is Cytoplasmic. A helical transmembrane segment spans residues 4-21 (VLAGLTALLLWLQGLLWF). Residues 22-95 (GEGGLNDVRG…QIIEREDDAR (74 aa)) lie on the Periplasmic side of the membrane. The stretch at 26 to 76 (LNDVRGLSRSVEAQREEVDRLRQRNQALEAEVNDLKTGLEALEERARSELG) forms a coiled coil.

It belongs to the FtsB family. Part of a complex composed of FtsB, FtsL and FtsQ.

Its subcellular location is the cell inner membrane. Its function is as follows. Essential cell division protein. May link together the upstream cell division proteins, which are predominantly cytoplasmic, with the downstream cell division proteins, which are predominantly periplasmic. This chain is Cell division protein FtsB, found in Alkalilimnicola ehrlichii (strain ATCC BAA-1101 / DSM 17681 / MLHE-1).